We begin with the raw amino-acid sequence, 562 residues long: Dihydroxy-acid dehydratase 2 (562 aa).

A [2Fe-2S] cluster-binding site is contributed by C50. D82 lines the Mg(2+) pocket. C123 provides a ligand contact to [2Fe-2S] cluster. The Mg(2+) site is built by D124, K125, and E447. K125 is modified (N6-carboxylysine). Catalysis depends on S473, which acts as the Proton acceptor.

It belongs to the IlvD/Edd family. Homodimer. [2Fe-2S] cluster is required as a cofactor. Requires Mg(2+) as cofactor.

It catalyses the reaction (2R)-2,3-dihydroxy-3-methylbutanoate = 3-methyl-2-oxobutanoate + H2O. The catalysed reaction is (2R,3R)-2,3-dihydroxy-3-methylpentanoate = (S)-3-methyl-2-oxopentanoate + H2O. Its pathway is amino-acid biosynthesis; L-isoleucine biosynthesis; L-isoleucine from 2-oxobutanoate: step 3/4. It functions in the pathway amino-acid biosynthesis; L-valine biosynthesis; L-valine from pyruvate: step 3/4. Its function is as follows. Functions in the biosynthesis of branched-chain amino acids. Catalyzes the dehydration of (2R,3R)-2,3-dihydroxy-3-methylpentanoate (2,3-dihydroxy-3-methylvalerate) into 2-oxo-3-methylpentanoate (2-oxo-3-methylvalerate) and of (2R)-2,3-dihydroxy-3-methylbutanoate (2,3-dihydroxyisovalerate) into 2-oxo-3-methylbutanoate (2-oxoisovalerate), the penultimate precursor to L-isoleucine and L-valine, respectively. This Bordetella pertussis (strain Tohama I / ATCC BAA-589 / NCTC 13251) protein is Dihydroxy-acid dehydratase 2.